We begin with the raw amino-acid sequence, 336 residues long: Peroxidase 20 (336 aa).

Residues 1–24 (MEIKQKKVWLSLIVLYAITTSVLG) form the signal peptide. 4 disulfides stabilise this stretch: cysteine 39/cysteine 119, cysteine 72/cysteine 77, cysteine 125/cysteine 331, and cysteine 204/cysteine 239. Residue histidine 70 is the Proton acceptor of the active site. Residues aspartate 71, valine 74, glycine 76, aspartate 78, and serine 80 each contribute to the Ca(2+) site. A substrate-binding site is contributed by proline 167. A glycan (N-linked (GlcNAc...) asparagine) is linked at asparagine 170. Histidine 197 provides a ligand contact to heme b. Threonine 198 serves as a coordination point for Ca(2+). Residues aspartate 252, threonine 255, and aspartate 260 each contribute to the Ca(2+) site.

Belongs to the peroxidase family. Classical plant (class III) peroxidase subfamily. Requires heme b as cofactor. The cofactor is Ca(2+).

It localises to the secreted. It catalyses the reaction 2 a phenolic donor + H2O2 = 2 a phenolic radical donor + 2 H2O. In terms of biological role, removal of H(2)O(2), oxidation of toxic reductants, biosynthesis and degradation of lignin, suberization, auxin catabolism, response to environmental stresses such as wounding, pathogen attack and oxidative stress. These functions might be dependent on each isozyme/isoform in each plant tissue. May be implicated in the systemic acquired resistance response via the salicylic acid signal transduction pathway. The chain is Peroxidase 20 (PER20) from Arabidopsis thaliana (Mouse-ear cress).